Reading from the N-terminus, the 275-residue chain is uncharacterized protein (275 aa).

The protein localises to the virion. This is an uncharacterized protein from Acanthamoeba polyphaga (Amoeba).